Here is a 210-residue protein sequence, read N- to C-terminus: Ion-translocating oxidoreductase complex subunit G (210 aa).

A helical transmembrane segment spans residues 9–29; that stretch reads GVTLAVFAAITTGLTAVINAV. Thr175 is subject to FMN phosphoryl threonine.

This sequence belongs to the RnfG family. The complex is composed of six subunits: RnfA, RnfB, RnfC, RnfD, RnfE and RnfG. FMN is required as a cofactor.

Its subcellular location is the cell inner membrane. Functionally, part of a membrane-bound complex that couples electron transfer with translocation of ions across the membrane. This chain is Ion-translocating oxidoreductase complex subunit G, found in Erwinia tasmaniensis (strain DSM 17950 / CFBP 7177 / CIP 109463 / NCPPB 4357 / Et1/99).